Here is a 1200-residue protein sequence, read N- to C-terminus: NACHT, LRR and PYD domains-containing protein 5 (1200 aa).

In terms of domain architecture, Pyrin spans 57–148; the sequence is SLTFSSYGLQ…SEKARDDMKR (92 aa). A compositionally biased stretch (basic and acidic residues) spans 142-152; the sequence is ARDDMKRHSPE. A disordered region spans residues 142-232; it reads ARDDMKRHSP…TEEQGHGGDT (91 aa). The span at 173–182 shows a compositional bias: polar residues; sequence QAVQQDSATA. Composition is skewed to low complexity over residues 192 to 202 and 209 to 221; these read QAMEQEGATAA and ISQA…ATAA. Positions 280 to 602 constitute an NACHT domain; the sequence is RTVVLHGKSG…ALYYVLEGLE (323 aa). Residue 286–293 participates in ATP binding; the sequence is GKSGIGKS. LRR repeat units lie at residues 704 to 727, 730 to 753, 780 to 803, 809 to 832, 836 to 863, 865 to 892, 893 to 916, 950 to 973, 979 to 1002, 1007 to 1034, 1036 to 1059, 1064 to 1092, and 1121 to 1142; these read LNSF…SFCL, CPYL…AEAC, HPHL…TLCA, TCKI…LWRI, NRNL…ALKH, KCLL…ILTT, SPSL…PLSD, NRSL…LLCR, HCSL…FLAL, NSWL…VMRE, SCHL…SLSC, SRHL…LKQK, and NRHL…MMKL.

It belongs to the NLRP family. As to quaternary structure, component of the subcortical maternal complex (SCMC), at least composed of NLRP5, KHDC3, OOEP, and TLE6 isoform 1. Within the complex, interacts with OOEP, KHDC3L and TLE6. The SCMC may facilitate translocation of its components between the nuclear and cytoplasmic compartments. As part of the SCMC interacts with the SCMC-associated protein ZBED3. As part of the SCMC interacts with the SCMC-associated protein CFL1/Cofilin-1. Interacts with PRKCE. Interacts with TUBB3 at cytoskeleton microtubules. In terms of processing, phosphorylated by PRKCE. In terms of tissue distribution, expressed in cumulus cells (at protein level). Highly abundant in oocytes and early embryos, however poorly expressed in somatic tissues such as the liver and spinal cord.

Its subcellular location is the cytoplasm. The protein localises to the cytoplasmic vesicle. It localises to the secretory vesicle. The protein resides in the cortical granule. It is found in the mitochondrion. Its subcellular location is the nucleus. The protein localises to the nucleolus. It localises to the golgi apparatus. Its function is as follows. Component of the subcortical maternal complex (SCMC), a multiprotein complex that plays a key role in early embryonic development. The SCMC complex is a structural constituent of cytoplasmic lattices, which consist in fibrous structures found in the cytoplasm of oocytes and preimplantation embryos. They are required to store maternal proteins critical for embryonic development, such as proteins that control epigenetic reprogramming of the preimplantation embryo, and prevent their degradation or activation. Required for the localization of cortical granules to the cortex of oocytes, via association with the cortical actin scaffold. Required for cortical actin clearance prior to oocyte exocytosis and prevention of polyspermy. Involved in regulating post-fertilization Ca(2+) release and endoplasmic reticulum storage (ER) storage via regulation of cellular localization. May be involved in the localization of mitochondria to the cytoplasm and perinuclear region in oocytes and early stage embryos, independent of its role in CPL formation. In Homo sapiens (Human), this protein is NACHT, LRR and PYD domains-containing protein 5 (NLRP5).